Here is a 59-residue protein sequence, read N- to C-terminus: Large ribosomal subunit protein uL30 (59 aa).

The protein belongs to the universal ribosomal protein uL30 family. As to quaternary structure, part of the 50S ribosomal subunit.

This is Large ribosomal subunit protein uL30 from Listeria innocua serovar 6a (strain ATCC BAA-680 / CLIP 11262).